A 301-amino-acid chain; its full sequence is Acetylglutamate kinase (301 aa).

Substrate is bound by residues 68–69, arginine 90, and asparagine 195; that span reads GG.

It belongs to the acetylglutamate kinase family. ArgB subfamily.

It localises to the cytoplasm. It carries out the reaction N-acetyl-L-glutamate + ATP = N-acetyl-L-glutamyl 5-phosphate + ADP. The protein operates within amino-acid biosynthesis; L-arginine biosynthesis; N(2)-acetyl-L-ornithine from L-glutamate: step 2/4. Catalyzes the ATP-dependent phosphorylation of N-acetyl-L-glutamate. In Pseudomonas fluorescens (strain Pf0-1), this protein is Acetylglutamate kinase.